A 278-amino-acid chain; its full sequence is DNA repair protein RecO (278 aa).

A compositionally biased stretch (polar residues) spans 1 to 12 (MGTNDALTSTED). The disordered stretch occupies residues 1-42 (MGTNDALTSTEDAVTAGANDAPLPAPPEPPRKARRATSRTSD).

The protein belongs to the RecO family.

In terms of biological role, involved in DNA repair and RecF pathway recombination. This Burkholderia lata (strain ATCC 17760 / DSM 23089 / LMG 22485 / NCIMB 9086 / R18194 / 383) protein is DNA repair protein RecO.